Consider the following 1466-residue polypeptide: ABC transporter G family member 10 (1466 aa).

Over residues 23–45 (NTPQYENNNNNNNNTSGNESPNI) the composition is skewed to low complexity. Positions 23–47 (NTPQYENNNNNNNNTSGNESPNILN) are disordered. One can recognise an ABC transporter 1 domain in the interval 138 to 392 (VTIFNLFRPS…FLDLGFDCEP (255 aa)). The region spanning 497-724 (WGDRFALISK…NGSTMSYQDQ (228 aa)) is the ABC transmembrane type-2 1 domain. 6 helical membrane passes run 501–521 (FALI…ASLF), 537–557 (AIYA…GLTF), 586–606 (IPLT…MYGL), 611–631 (GKFF…VAFF), 641–661 (LYVS…YGGY), and 767–787 (IITF…LELF). An ABC transporter 2 domain is found at 838 to 1082 (FTWNHIHYTV…LTSYFERNGV (245 aa)). 874–881 (GSSGAGKT) serves as a coordination point for ATP. The region spanning 1177–1399 (SYVYGIFTQA…LTCKEYFKPT (223 aa)) is the ABC transmembrane type-2 2 domain. 6 consecutive transmembrane segments (helical) span residues 1178–1198 (YVYG…FTFW), 1214–1234 (IFEI…QFLI), 1253–1273 (FAIS…TICF), 1290–1310 (FYFY…GQVV), 1319–1339 (LAQT…GVLV), and 1440–1460 (YGIL…FVYL).

It belongs to the ABC transporter superfamily. ABCG family. PDR (TC 3.A.1.205) subfamily.

Its subcellular location is the membrane. In Dictyostelium discoideum (Social amoeba), this protein is ABC transporter G family member 10 (abcG10).